A 298-amino-acid polypeptide reads, in one-letter code: Serpentine receptor class delta-34 (298 aa).

Helical transmembrane passes span 10-30, 54-74, 99-119, 158-178, 207-227, and 242-262; these read SSIMTMEANFFMCIIVVFTQV, ACFFSFDFFQLVFDASSFAIP, MILLSSYLLSLIVGVIYVITY, LATNLNMISIFVPPIMSIVFI, LTIQTLVPAVCVIPIYIAHLI, and VLYMMLSLPTAIDAFIVIVTI.

This sequence belongs to the nematode receptor-like protein srd family.

It localises to the membrane. This Caenorhabditis elegans protein is Serpentine receptor class delta-34 (srd-34).